We begin with the raw amino-acid sequence, 178 residues long: Putative RING-H2 finger protein ATL19 (178 aa).

A helical transmembrane segment spans residues 11-31 (LISVLGLAVFIGLCILLVVLI). The segment at 130 to 172 (CAICLSGYVVNEECRVFPVCRHIYHALCIDAWLKNHLTCPTCR) adopts an RING-type; atypical zinc-finger fold.

The protein belongs to the RING-type zinc finger family. ATL subfamily.

The protein localises to the membrane. It carries out the reaction S-ubiquitinyl-[E2 ubiquitin-conjugating enzyme]-L-cysteine + [acceptor protein]-L-lysine = [E2 ubiquitin-conjugating enzyme]-L-cysteine + N(6)-ubiquitinyl-[acceptor protein]-L-lysine.. It functions in the pathway protein modification; protein ubiquitination. In Arabidopsis thaliana (Mouse-ear cress), this protein is Putative RING-H2 finger protein ATL19 (ATL19).